The sequence spans 348 residues: Methylthioribose-1-phosphate isomerase (348 aa).

Substrate is bound by residues 54-56 (RGA), R96, and Q199. D240 acts as the Proton donor in catalysis. Substrate is bound at residue 250–251 (NK).

It belongs to the eIF-2B alpha/beta/delta subunits family. MtnA subfamily.

The enzyme catalyses 5-(methylsulfanyl)-alpha-D-ribose 1-phosphate = 5-(methylsulfanyl)-D-ribulose 1-phosphate. Its pathway is amino-acid biosynthesis; L-methionine biosynthesis via salvage pathway; L-methionine from S-methyl-5-thio-alpha-D-ribose 1-phosphate: step 1/6. Catalyzes the interconversion of methylthioribose-1-phosphate (MTR-1-P) into methylthioribulose-1-phosphate (MTRu-1-P). This is Methylthioribose-1-phosphate isomerase from Thioalkalivibrio sulfidiphilus (strain HL-EbGR7).